A 1262-amino-acid polypeptide reads, in one-letter code: Collagen alpha-1(III) chain (1262 aa).

The N-terminal stretch at 1–23 (MMSFVQKVSLFILAVFQPSVILA) is a signal peptide. A propeptide spans 24–150 (QQDALGGCTH…PSISGGSFSP (127 aa)) (N-terminal propeptide). A VWFC domain is found at 29-88 (GGCTHLGQEYADRDVWKPEPCQICVCDSGSVLCDDIICDDQELDCPNPEIPLGECCPVCP). 2 disordered regions span residues 95 to 143 (TELP…CPSI) and 160 to 1000 (GSVG…GGVA). Residues 102 to 118 (GPKGDPGSPGSPGRTGA) show a composition bias toward low complexity. Positions 119–134 (PGPPGQPGSPGAPGPP) are enriched in pro residues. The segment at 145–164 (GGSFSPQYDSYDVKAGSVGM) is nonhelical region (N-terminal). Positions 165–994 (GYPPQPISGF…PGPSGPPGPC (830 aa)) are triple-helical region. A compositionally biased stretch (pro residues) spans 167–190 (PPQPISGFPGPPGPSGPPGPPGHA). A compositionally biased stretch (low complexity) spans 192–201 (PPGSNGYQGP). The span at 202-216 (PGEPGQPGPSGPPGP) shows a compositional bias: pro residues. Positions 228–240 (KDGEPGRPGRNGD) are enriched in basic and acidic residues. Residues 253 to 264 (PGMPGMPGMKGA) show a composition bias toward low complexity. The residue at position 262 (K262) is a 5-hydroxylysine. The span at 265–274 (RGFDGKDGAK) shows a compositional bias: basic and acidic residues. 2 stretches are compositionally biased toward low complexity: residues 276 to 295 (DSGAPGPKGEAGQPGANGSP) and 339 to 376 (TAGFPGSPGFKGEAGPPGPAGASGNPGERGEPGPQGQA). A 5-hydroxylysine modification is found at K283. Positions 389–414 (GSPGGKGEMGPSGIPGGPGPPGGRGL) are enriched in gly residues. 2 stretches are compositionally biased toward low complexity: residues 534-549 (MRGLPGIPGSPGSDGK) and 631-640 (PGPSGSPGLQ). Residues 641-650 (GLPGGPGPAG) are compositionally biased toward gly residues. A compositionally biased stretch (low complexity) spans 672–684 (PKGENGIPGERGP). A compositionally biased stretch (gly residues) spans 692-701 (GARGGPGPAG). 4 stretches are compositionally biased toward low complexity: residues 723–738 (LQGMPGERGASGSPGP), 781–790 (TGPAGAPGPA), 802–817 (QGLPGPAGFPGAPGQN), and 828–838 (PPGLRGEAGPP). A 5-hydroxylysine modification is found at K859. The segment covering 863–872 (GSPGGPGAAG) has biased composition (gly residues). The span at 895–904 (PGVPGPPGHP) shows a compositional bias: pro residues. A compositionally biased stretch (low complexity) spans 927 to 940 (PQGAIGSPGASGAR). Residues 976 to 993 (AGPPGQPGLPGPSGPPGP) show a composition bias toward pro residues. Residues 995 to 1003 (CGGGVASLG) form a nonhelical region (C-terminal) region. A propeptide spans 1018–1262 (DEPKENEINL…GVDVGPVCFL (245 aa)) (C-terminal propeptide). The Fibrillar collagen NC1 domain maps to 1028-1262 (GEIMSSMKSI…GVDVGPVCFL (235 aa)). 3 cysteine pairs are disulfide-bonded: C1058–C1090, C1098–C1260, and C1168–C1213. 5 residues coordinate Ca(2+): D1076, N1078, Q1079, C1081, and D1084. N1163 carries N-linked (GlcNAc...) asparagine glycosylation.

The protein belongs to the fibrillar collagen family. In terms of assembly, trimers of identical alpha 1(III) chains. The chains are linked to each other by interchain disulfide bonds. Trimers are also cross-linked via hydroxylysines. Post-translationally, prolines at the third position of the tripeptide repeating unit (G-X-Y) are hydroxylated in some or all of the chains.

It localises to the secreted. The protein resides in the extracellular space. The protein localises to the extracellular matrix. Collagen type III occurs in most soft connective tissues along with type I collagen. The sequence is that of Collagen alpha-1(III) chain (COL3A1) from Gallus gallus (Chicken).